Here is a 431-residue protein sequence, read N- to C-terminus: Keratin, type I cytoskeletal 40 (431 aa).

A head region spans residues 1 to 89 (MASEGSPDCC…CEEGTFNSNE (89 aa)). Residues 89–400 (EKETMQFLND…GLLEKEDSRL (312 aa)) enclose the IF rod domain. Residues 90-124 (KETMQFLNDRLASYLERVRSLEENNAELECRIREQ) form a coil 1A region. Residues 125–135 (CEPDATPVCPD) form a linker 1 region. A coil 1B region spans residues 136–236 (YQRYFDTIEE…HEEEVNLLRE (101 aa)). The segment at 237–252 (QLGDRLNVELDTAPTV) is linker 12. Residues 253 to 396 (DLNKVLDEMR…NTYRGLLEKE (144 aa)) form a coil 2 region. Residues 397–431 (DSRLPCNPGSTASISNSACEPCSAYVICTVENCCA) are tail.

Belongs to the intermediate filament family. Heterotetramer of two type I and two type II keratins.

In terms of biological role, may play a role in late hair differentiation. This chain is Keratin, type I cytoskeletal 40 (Krt40), found in Rattus norvegicus (Rat).